Consider the following 146-residue polypeptide: Calmodulin-like protein 5 (146 aa).

Ala2 bears the N-acetylalanine mark. 4 consecutive EF-hand domains span residues 8–43 (EEEAQYKKAFSAVDTDGNGTINAQELGAALKATGKN), 44–74 (LSEAQLRKLISEVDSDGDGEISFQEFLTAAK), 78–113 (AGLEDLQVAFRAFDQDGDGHITVDELRRAMAGLGQP), and 114–146 (LPQEELDAMIREADVDQDGRVNYEEFARMLAQE). Residues Asp21, Asp23, Asn25, Thr27, Glu32, Asp57, Asp59, Asp61, Glu63, Glu68, Asp91, Asp93, Asp95, His97, Glu102, Asp127, Asp129, Asp131, Arg133, and Glu138 each coordinate Ca(2+).

In terms of assembly, associates with transglutaminase 3. As to expression, particularly abundant in the epidermis where its expression is directly related to keratinocyte differentiation. Very low expression in lung.

Binds calcium. May be involved in terminal differentiation of keratinocytes. The protein is Calmodulin-like protein 5 (CALML5) of Homo sapiens (Human).